We begin with the raw amino-acid sequence, 447 residues long: N-succinylarginine dihydrolase (447 aa).

Substrate is bound by residues 19–28 (AGLSFGNEAS), Asn110, and 137–138 (HR). Glu174 is a catalytic residue. Substrate is bound at residue Arg212. His248 is a catalytic residue. Positions 250 and 359 each coordinate substrate. The Nucleophile role is filled by Cys365.

Belongs to the succinylarginine dihydrolase family. Homodimer.

The catalysed reaction is N(2)-succinyl-L-arginine + 2 H2O + 2 H(+) = N(2)-succinyl-L-ornithine + 2 NH4(+) + CO2. It functions in the pathway amino-acid degradation; L-arginine degradation via AST pathway; L-glutamate and succinate from L-arginine: step 2/5. Catalyzes the hydrolysis of N(2)-succinylarginine into N(2)-succinylornithine, ammonia and CO(2). The sequence is that of N-succinylarginine dihydrolase from Escherichia coli O6:K15:H31 (strain 536 / UPEC).